The primary structure comprises 183 residues: Caltractin ICL1f (183 aa).

Residues 1 to 19 are compositionally biased toward low complexity; sequence MARRGQQPPQQQQQAQPAQ. Positions 1–30 are disordered; sequence MARRGQQPPQQQQQAQPAQKNQAGKFNPAE. EF-hand domains are found at residues 39–74, 75–110, 112–147, and 148–183; these read EEVL…LGFE, AKNQ…RISE, DSKA…LGET, and MDDS…KTFA. Ca(2+) contacts are provided by aspartate 52, aspartate 54, threonine 56, serine 58, glutamate 63, aspartate 88, aspartate 90, serine 92, glutamine 94, and glutamate 99.

Belongs to the centrin family. As to quaternary structure, monomer.

It is found in the cytoplasm. It localises to the cytoskeleton. In terms of biological role, plays a fundamental role in microtubule organizing center structure and function. Component of the infraciliary lattice (ICL) and the ciliary basal bodies. This chain is Caltractin ICL1f (Icl1f), found in Paramecium tetraurelia.